Consider the following 312-residue polypeptide: Malate dehydrogenase (312 aa).

Residues glycine 7–glycine 13 and aspartate 34 contribute to the NAD(+) site. Residues arginine 81 and arginine 87 each contribute to the substrate site. NAD(+)-binding positions include asparagine 94 and isoleucine 117–asparagine 119. Residues asparagine 119 and arginine 153 each coordinate substrate. The active-site Proton acceptor is the histidine 177. Residue methionine 227 coordinates NAD(+).

Belongs to the LDH/MDH superfamily. MDH type 1 family. Homodimer.

The enzyme catalyses (S)-malate + NAD(+) = oxaloacetate + NADH + H(+). Catalyzes the reversible oxidation of malate to oxaloacetate. This Escherichia coli O139:H28 (strain E24377A / ETEC) protein is Malate dehydrogenase.